The primary structure comprises 207 residues: Superoxide dismutase [Mn] (207 aa).

Residues His28, His76, Asp160, and His164 each coordinate Mn(2+).

This sequence belongs to the iron/manganese superoxide dismutase family. Mn(2+) serves as cofactor.

It catalyses the reaction 2 superoxide + 2 H(+) = H2O2 + O2. In terms of biological role, destroys superoxide anion radicals which are normally produced within the cells and which are toxic to biological systems. The polypeptide is Superoxide dismutase [Mn] (sodA) (Mycobacterium intracellulare (strain ATCC 13950 / DSM 43223 / JCM 6384 / NCTC 13025 / 3600)).